We begin with the raw amino-acid sequence, 798 residues long: Probable DEAD-box ATP-dependent RNA helicase 48 (798 aa).

3 disordered regions span residues 76 to 100 (KMWGNPDSGEKTAKSKQSHGPMSPK), 117 to 148 (DFWNENDGPVKKSDQGSRSGSDSIDSTSNSPI), and 236 to 257 (FRKNDSSTEEDSDEEGDEGKMI). Low complexity predominate over residues 132–148 (GSRSGSDSIDSTSNSPI). A compositionally biased stretch (acidic residues) spans 242–252 (STEEDSDEEGD). Positions 328–356 (KRFDESCISPLTLKALSASGILKMTRVQD) match the Q motif motif. The 185-residue stretch at 359 to 543 (LSECLDGKDA…QLVLKRDHSY (185 aa)) folds into the Helicase ATP-binding domain. 372–379 (AKTGTGKS) is an ATP binding site. A DEAD box motif is present at residues 491-494 (DEAD). The 150-residue stretch at 577–726 (LLKEHINNTP…SIVKHQVDQS (150 aa)) folds into the Helicase C-terminal domain.

This sequence belongs to the DEAD box helicase family.

The catalysed reaction is ATP + H2O = ADP + phosphate + H(+). The chain is Probable DEAD-box ATP-dependent RNA helicase 48 (RH48) from Arabidopsis thaliana (Mouse-ear cress).